The primary structure comprises 698 residues: Elongation factor G (698 aa).

The region spanning 8–290 (ERYRNIGISA…AVIELLPSPT (283 aa)) is the tr-type G domain. Residues 17–24 (AHIDAGKT), 88–92 (DTPGH), and 142–145 (NKMD) contribute to the GTP site.

Belongs to the TRAFAC class translation factor GTPase superfamily. Classic translation factor GTPase family. EF-G/EF-2 subfamily.

It localises to the cytoplasm. Functionally, catalyzes the GTP-dependent ribosomal translocation step during translation elongation. During this step, the ribosome changes from the pre-translocational (PRE) to the post-translocational (POST) state as the newly formed A-site-bound peptidyl-tRNA and P-site-bound deacylated tRNA move to the P and E sites, respectively. Catalyzes the coordinated movement of the two tRNA molecules, the mRNA and conformational changes in the ribosome. The protein is Elongation factor G of Chromobacterium violaceum (strain ATCC 12472 / DSM 30191 / JCM 1249 / CCUG 213 / NBRC 12614 / NCIMB 9131 / NCTC 9757 / MK).